The sequence spans 56 residues: Large ribosomal subunit protein bL33A (56 aa).

Belongs to the bacterial ribosomal protein bL33 family.

This chain is Large ribosomal subunit protein bL33A, found in Sorangium cellulosum (strain So ce56) (Polyangium cellulosum (strain So ce56)).